The primary structure comprises 161 residues: ATP synthase subunit b 1 (161 aa).

Residues 3 to 23 form a helical membrane-spanning segment; the sequence is FDASFFALVGLVLFFVLIAYL.

Belongs to the ATPase B chain family. As to quaternary structure, F-type ATPases have 2 components, F(1) - the catalytic core - and F(0) - the membrane proton channel. F(1) has five subunits: alpha(3), beta(3), gamma(1), delta(1), epsilon(1). F(0) has three main subunits: a(1), b(2) and c(10-14). The alpha and beta chains form an alternating ring which encloses part of the gamma chain. F(1) is attached to F(0) by a central stalk formed by the gamma and epsilon chains, while a peripheral stalk is formed by the delta and b chains.

It is found in the cell inner membrane. Its function is as follows. F(1)F(0) ATP synthase produces ATP from ADP in the presence of a proton or sodium gradient. F-type ATPases consist of two structural domains, F(1) containing the extramembraneous catalytic core and F(0) containing the membrane proton channel, linked together by a central stalk and a peripheral stalk. During catalysis, ATP synthesis in the catalytic domain of F(1) is coupled via a rotary mechanism of the central stalk subunits to proton translocation. Functionally, component of the F(0) channel, it forms part of the peripheral stalk, linking F(1) to F(0). The chain is ATP synthase subunit b 1 from Agrobacterium fabrum (strain C58 / ATCC 33970) (Agrobacterium tumefaciens (strain C58)).